The primary structure comprises 656 residues: FAST kinase domain-containing protein 3, mitochondrial (656 aa).

Residues 587-645 form the RAP domain; the sequence is VALCIDGPQRFCLGSKHLLGKEAIKQRHLRLLGYQVVQVPYHELELLTSRLELVDYLQR.

It belongs to the FAST kinase family.

It localises to the mitochondrion. Its function is as follows. Required for normal mitochondrial respiration. Increases steady-state levels and half-lives of a subset of mature mitochondrial mRNAs MT-ND2, MT-ND3, MT-CYTB, MT-CO2, and MT-ATP8/6. Promotes MT-CO1 mRNA translation and increases mitochondrial complex IV assembly and activity. This chain is FAST kinase domain-containing protein 3, mitochondrial (Fastkd3), found in Rattus norvegicus (Rat).